The primary structure comprises 543 residues: ATP synthase subunit alpha (543 aa).

174-181 is an ATP binding site; it reads GDRQTGKT.

This sequence belongs to the ATPase alpha/beta chains family. As to quaternary structure, F-type ATPases have 2 components, CF(1) - the catalytic core - and CF(0) - the membrane proton channel. CF(1) has five subunits: alpha(3), beta(3), gamma(1), delta(1), epsilon(1). CF(0) has three main subunits: a(1), b(2) and c(9-12). The alpha and beta chains form an alternating ring which encloses part of the gamma chain. CF(1) is attached to CF(0) by a central stalk formed by the gamma and epsilon chains, while a peripheral stalk is formed by the delta and b chains.

The protein resides in the cell membrane. It catalyses the reaction ATP + H2O + 4 H(+)(in) = ADP + phosphate + 5 H(+)(out). Functionally, produces ATP from ADP in the presence of a proton gradient across the membrane. The alpha chain is a regulatory subunit. The polypeptide is ATP synthase subunit alpha (Bifidobacterium longum subsp. infantis (strain ATCC 15697 / DSM 20088 / JCM 1222 / NCTC 11817 / S12)).